A 751-amino-acid chain; its full sequence is Nucleoporin NUP37 (751 aa).

The WD 1 repeat unit spans residues 21-65 (SLGRRIYDVKTYPVQSPQGATILIYGHENGATVVWRGGRRLKPPK). The segment at 57 to 77 (GGRRLKPPKPQTNEKRNGTKP) is disordered. Residues 68–77 (TNEKRNGTKP) show a composition bias toward basic and acidic residues. WD repeat units follow at residues 162–209 (TNDV…LTGP), 237–271 (AQAA…KPGT), 282–322 (YLPS…LPSD), and 351–390 (TSRK…PTAA). Residues 419–443 (EGTSPLRNPTTQKASSSSSGEFVPM) form a disordered region. The segment covering 423-438 (PLRNPTTQKASSSSSG) has biased composition (polar residues). WD repeat units follow at residues 455 to 492 (AFGG…VLFL) and 494 to 534 (GADP…RMIR). The interval 671–692 (IPSTDAGDEETIPATSAPSSQQ) is disordered. Positions 683–692 (PATSAPSSQQ) are enriched in polar residues. Residues 716 to 750 (RDVEQELLDIMEIDRELEQLEQARERGRKRVFFEE) adopt a coiled-coil conformation.

In terms of assembly, the nuclear pore complex (NPC) constitutes the exclusive means of nucleocytoplasmic transport. NPCs allow the passive diffusion of ions and small molecules and the active, nuclear transport receptor-mediated bidirectional transport of macromolecules such as proteins, RNAs, ribonucleoparticles (RNPs), and ribosomal subunits across the nuclear envelope. The 55-60 MDa NPC is composed of at least 28 different subunits: AMO1, ELYS, GLE1, GLE2, MLP1, NDC1, NIC96, NSP1, NUP133, NUP145, NUP152, NUP159, NUP170, NUP188, NUP192, NUP37, NUP49, NUP53, NUP56, NUP57, NUP82, NUP84, NUP85, POM152, POM33, POM34, SEC13 and SEH1. Due to its 8-fold rotational symmetry, all subunits are present with 8 copies or multiples thereof.

The protein resides in the nucleus. It is found in the nuclear pore complex. The sequence is that of Nucleoporin NUP37 (NUP37) from Chaetomium thermophilum (strain DSM 1495 / CBS 144.50 / IMI 039719) (Thermochaetoides thermophila).